We begin with the raw amino-acid sequence, 304 residues long: Porphobilinogen deaminase (304 aa).

Position 240 is an S-(dipyrrolylmethanemethyl)cysteine (C240).

The protein belongs to the HMBS family. In terms of assembly, monomer. The cofactor is dipyrromethane.

The enzyme catalyses 4 porphobilinogen + H2O = hydroxymethylbilane + 4 NH4(+). It functions in the pathway porphyrin-containing compound metabolism; protoporphyrin-IX biosynthesis; coproporphyrinogen-III from 5-aminolevulinate: step 2/4. Tetrapolymerization of the monopyrrole PBG into the hydroxymethylbilane pre-uroporphyrinogen in several discrete steps. The chain is Porphobilinogen deaminase from Xanthomonas campestris pv. campestris (strain ATCC 33913 / DSM 3586 / NCPPB 528 / LMG 568 / P 25).